The primary structure comprises 502 residues: Pyruvate kinase (502 aa).

Arg54 contributes to the substrate binding site. Asn56, Ser58, Asp88, and Thr89 together coordinate K(+). Position 56–59 (56–59) interacts with ATP; sequence NFSH. ATP-binding residues include Arg95 and Lys184. Glu252 contributes to the Mg(2+) binding site. Substrate-binding residues include Gly275, Asp276, and Thr308. Asp276 contributes to the Mg(2+) binding site.

This sequence belongs to the pyruvate kinase family. Homotetramer. Mg(2+) serves as cofactor. K(+) is required as a cofactor.

The catalysed reaction is pyruvate + ATP = phosphoenolpyruvate + ADP + H(+). It participates in carbohydrate degradation; glycolysis; pyruvate from D-glyceraldehyde 3-phosphate: step 5/5. With respect to regulation, regulated by phosphoenolpyruvate substrate and is allosterically activated by ribose-5-phosphate, AMP and other nucleoside monophosphates but not by fructose-1,6-bisphosphate. The protein is Pyruvate kinase (pyk) of Lactococcus lactis subsp. lactis (strain IL1403) (Streptococcus lactis).